Reading from the N-terminus, the 380-residue chain is Cytochrome b (380 aa).

4 helical membrane-spanning segments follow: residues 34 to 54 (FGSLLAVCLTTQILTGLLLAM), 78 to 99 (WLIRNLHANGASFFFICIFLHI), 114 to 134 (WNTGVILLLTLMATAFVGYVL), and 179 to 199 (FFALHFLLPFVITGITITHLM). Heme b-binding residues include histidine 84 and histidine 98. 2 residues coordinate heme b: histidine 183 and histidine 197. Histidine 202 lines the a ubiquinone pocket. The next 4 helical transmembrane spans lie at 227–247 (LKDILGLALMLTPFLTLALFS), 289–309 (LGGVLALAASVLILLLIPFLH), 321–341 (LSQALFWLLVANLLILTWVGS), and 348–368 (FIIIGQMASLSYFTILLILFP).

The protein belongs to the cytochrome b family. As to quaternary structure, the cytochrome bc1 complex contains 11 subunits: 3 respiratory subunits (MT-CYB, CYC1 and UQCRFS1), 2 core proteins (UQCRC1 and UQCRC2) and 6 low-molecular weight proteins (UQCRH/QCR6, UQCRB/QCR7, UQCRQ/QCR8, UQCR10/QCR9, UQCR11/QCR10 and a cleavage product of UQCRFS1). This cytochrome bc1 complex then forms a dimer. Requires heme b as cofactor.

It localises to the mitochondrion inner membrane. Its function is as follows. Component of the ubiquinol-cytochrome c reductase complex (complex III or cytochrome b-c1 complex) that is part of the mitochondrial respiratory chain. The b-c1 complex mediates electron transfer from ubiquinol to cytochrome c. Contributes to the generation of a proton gradient across the mitochondrial membrane that is then used for ATP synthesis. In Syrmaticus reevesii (Reeves's pheasant), this protein is Cytochrome b (MT-CYB).